The chain runs to 224 residues: Cytidylate kinase (224 aa).

Residue 11-19 (GPAAAGKST) participates in ATP binding.

Belongs to the cytidylate kinase family. Type 1 subfamily.

The protein localises to the cytoplasm. The catalysed reaction is CMP + ATP = CDP + ADP. The enzyme catalyses dCMP + ATP = dCDP + ADP. The protein is Cytidylate kinase (cmk) of Bacillus subtilis (strain 168).